Reading from the N-terminus, the 447-residue chain is UPF0210 protein LCK_00974 (447 aa).

The protein belongs to the UPF0210 family. As to quaternary structure, homodimer.

This Leuconostoc citreum (strain KM20) protein is UPF0210 protein LCK_00974.